Here is a 459-residue protein sequence, read N- to C-terminus: Prenyltransferase penI (459 aa).

Residues 107–108 (VV) and Glu-111 contribute to the L-tryptophan site. Substrate is bound by residues Arg-126, Arg-276, Lys-278, Tyr-280, and Tyr-384.

Belongs to the tryptophan dimethylallyltransferase family.

It carries out the reaction quinolinone B + dimethylallyl diphosphate = peniprequinolone + diphosphate. It participates in secondary metabolite biosynthesis. The protein operates within alkaloid biosynthesis. Its pathway is mycotoxin biosynthesis. Prenyltransferase; part of the gene cluster that mediates the biosynthesis of penigequinolones, potent insecticidal alkaloids that contain a highly modified 10-carbon prenyl group. The first stage is catalyzed by the nonribosomal peptide synthetase penN that condenses anthranilic acid and O-methyl-L-tyrosine to produce 4'-methoxycyclopeptin. 4'-methoxycyclopeptin is then converted to 4'-methoxydehydrocyclopeptin by the ketoglutarate-dependent dioxygenase penM through dehydrogenation to form a double bond between C-alpha and C-beta of the O-methyltyrosine side chain. PenM also converts its first product methoxydehydrocyclopeptin to 4'-methoxycyclopenin. The following conversion of 4'methoxycyclopenin into 4'-methoxyviridicatin is catalyzed by the cyclopenase penL. 4'-methoxyviridicatin is the precursor of quinolone natural products, and is further converted to quinolinone B. The prenyltransferase penI then catalyzes the canonical Friedel-Crafts alkylation of quinolinone B with dimethylallyl cation to yield dimethylallyl quinolone, which is subjected to FAD-dependent dehydrogenation by the FAD-linked oxidoreductase penH to yield conjugated aryl diene. The delta(3') double bond then serves as the site of the second alkylation with DMAPP catalyzed by the prenyltransferase penG to yield a carbenium ion intermediate, which can be attacked by H(2)O to yield a styrenyl quinolone containing a C3'-hydroxyprenyl chain, or undergo cyclization to yield yaequinolones J1 and J2. The conversion of the styrenyl quinolone into the tetrahydrofuran-containing yaequinolone C is performed by the FAD-dependent monooxygenase penE and involves epoxidation of the terminal C7'-C8' olefin, followed by epoxide ring opening initiated by the C3' hydroxyl group. The predicted cysteine hydrolase penJ acts as an epoxide hydrolase that enhances the rate of the 5-exo-tet cyclization step, increasing the yield of yaequinolone C. PenF catalyzes the cationic rearrangement of the epoxide formed by penE (before ring opening to produce yaequinolone C) into yaequinolone D. Finally, the short-chain dehydrogenase/reductase (SDR)-like reductase penD, catalyzes both the dehydration of yaequinolone D and the reduction of the resulting oxonium to yield penigequinolone. The protein is Prenyltransferase penI of Penicillium thymicola.